Reading from the N-terminus, the 135-residue chain is Large ribosomal subunit protein mL54 (135 aa).

A mitochondrion-targeting transit peptide spans 1–14 (MAAAHLLRASRVWA).

The protein belongs to the mitochondrion-specific ribosomal protein mL54 family. As to quaternary structure, component of the mitochondrial ribosome large subunit (39S) which comprises a 16S rRNA and about 50 distinct proteins.

The protein localises to the mitochondrion. The protein is Large ribosomal subunit protein mL54 (Mrpl54) of Mus musculus (Mouse).